The sequence spans 145 residues: Protein SprT-like (145 aa).

In terms of domain architecture, SprT-like spans 4 to 140 (TNYVQEVSLA…VCGNCHGKLI (137 aa)). A Zn(2+)-binding site is contributed by His-64. Glu-65 is an active-site residue. His-68 serves as a coordination point for Zn(2+).

This sequence belongs to the SprT family. It depends on Zn(2+) as a cofactor.

Its subcellular location is the cytoplasm. The protein is Protein SprT-like of Streptococcus pyogenes serotype M6 (strain ATCC BAA-946 / MGAS10394).